Reading from the N-terminus, the 179-residue chain is Large ribosomal subunit protein uL5 (179 aa).

Belongs to the universal ribosomal protein uL5 family. In terms of assembly, part of the 50S ribosomal subunit; part of the 5S rRNA/L5/L18/L25 subcomplex. Contacts the 5S rRNA and the P site tRNA. Forms a bridge to the 30S subunit in the 70S ribosome.

Functionally, this is one of the proteins that bind and probably mediate the attachment of the 5S RNA into the large ribosomal subunit, where it forms part of the central protuberance. In the 70S ribosome it contacts protein S13 of the 30S subunit (bridge B1b), connecting the 2 subunits; this bridge is implicated in subunit movement. Contacts the P site tRNA; the 5S rRNA and some of its associated proteins might help stabilize positioning of ribosome-bound tRNAs. The chain is Large ribosomal subunit protein uL5 from Shewanella sp. (strain MR-4).